The chain runs to 503 residues: Probable cytosol aminopeptidase (503 aa).

Mn(2+) contacts are provided by lysine 272 and aspartate 277. Lysine 284 is a catalytic residue. The Mn(2+) site is built by aspartate 295, aspartate 354, and glutamate 356. The active site involves arginine 358.

The protein belongs to the peptidase M17 family. It depends on Mn(2+) as a cofactor.

Its subcellular location is the cytoplasm. It carries out the reaction Release of an N-terminal amino acid, Xaa-|-Yaa-, in which Xaa is preferably Leu, but may be other amino acids including Pro although not Arg or Lys, and Yaa may be Pro. Amino acid amides and methyl esters are also readily hydrolyzed, but rates on arylamides are exceedingly low.. The catalysed reaction is Release of an N-terminal amino acid, preferentially leucine, but not glutamic or aspartic acids.. Presumably involved in the processing and regular turnover of intracellular proteins. Catalyzes the removal of unsubstituted N-terminal amino acids from various peptides. In Chlorobium limicola (strain DSM 245 / NBRC 103803 / 6330), this protein is Probable cytosol aminopeptidase.